The chain runs to 424 residues: Imidazolonepropionase (424 aa).

Positions 84 and 86 each coordinate Fe(3+). Residues H84 and H86 each contribute to the Zn(2+) site. R93, Y156, and H189 together coordinate 4-imidazolone-5-propanoate. Position 156 (Y156) interacts with N-formimidoyl-L-glutamate. H254 lines the Fe(3+) pocket. H254 contacts Zn(2+). E257 is a binding site for 4-imidazolone-5-propanoate. Residue D328 participates in Fe(3+) binding. D328 provides a ligand contact to Zn(2+). Residues N330 and G332 each contribute to the N-formimidoyl-L-glutamate site. Residue S333 participates in 4-imidazolone-5-propanoate binding.

It belongs to the metallo-dependent hydrolases superfamily. HutI family. Zn(2+) serves as cofactor. The cofactor is Fe(3+).

The protein localises to the cytoplasm. It catalyses the reaction 4-imidazolone-5-propanoate + H2O = N-formimidoyl-L-glutamate. Its pathway is amino-acid degradation; L-histidine degradation into L-glutamate; N-formimidoyl-L-glutamate from L-histidine: step 3/3. Its function is as follows. Catalyzes the hydrolytic cleavage of the carbon-nitrogen bond in imidazolone-5-propanoate to yield N-formimidoyl-L-glutamate. It is the third step in the universal histidine degradation pathway. The protein is Imidazolonepropionase of Geobacillus sp. (strain WCH70).